Here is a 151-residue protein sequence, read N- to C-terminus: Lipoprotein signal peptidase (151 aa).

Helical transmembrane passes span 61–81 (GSQW…IWIG) and 88–107 (SRWQ…GNGI). Catalysis depends on residues aspartate 117 and aspartate 133. The helical transmembrane segment at 128–148 (VFNLADVAINLAVLCLLIEAI) threads the bilayer.

Belongs to the peptidase A8 family.

Its subcellular location is the cell inner membrane. The enzyme catalyses Release of signal peptides from bacterial membrane prolipoproteins. Hydrolyzes -Xaa-Yaa-Zaa-|-(S,diacylglyceryl)Cys-, in which Xaa is hydrophobic (preferably Leu), and Yaa (Ala or Ser) and Zaa (Gly or Ala) have small, neutral side chains.. It participates in protein modification; lipoprotein biosynthesis (signal peptide cleavage). This protein specifically catalyzes the removal of signal peptides from prolipoproteins. The polypeptide is Lipoprotein signal peptidase (Synechococcus sp. (strain RCC307)).